Here is a 128-residue protein sequence, read N- to C-terminus: B2 protein (128 aa).

Residues 1–10 (SLILLVAVQA) form the signal peptide. Intrachain disulfides connect Cys26–Cys57 and Cys97–Cys114.

It belongs to the PBP/GOBP family. Post-translationally, N-glycosylated. Tubular accessory sex gland.

The protein localises to the secreted. In terms of biological role, may be a carrier protein for lipids. In Tenebrio molitor (Yellow mealworm beetle), this protein is B2 protein.